We begin with the raw amino-acid sequence, 340 residues long: Guanine nucleotide-binding protein subunit beta-4 (340 aa).

Serine 2 carries the N-acetylserine modification. A Phosphoserine modification is found at serine 2. WD repeat units lie at residues 53-92 (GHLA…KMHA), 95-134 (LRSS…GNVR), 141-179 (GHTG…QTTT), 182-221 (GHSG…CRQS), and 224-263 (GHIS…ELLL). Histidine 266 carries the phosphohistidine modification. WD repeat units lie at residues 268–307 (NIIC…RAGV) and 310–339 (GHDN…LRIW).

Belongs to the WD repeat G protein beta family. In terms of assembly, g proteins are composed of 3 units, alpha, beta and gamma. In terms of tissue distribution, widely expressed in the brain. Highest levels found in the hippocampus and layers v and vi of the neocortex.

Guanine nucleotide-binding proteins (G proteins) are involved as a modulator or transducer in various transmembrane signaling systems. The beta and gamma chains are required for the GTPase activity, for replacement of GDP by GTP, and for G protein-effector interaction. This is Guanine nucleotide-binding protein subunit beta-4 (Gnb4) from Rattus norvegicus (Rat).